The following is a 451-amino-acid chain: UPF0210 protein NMCC_1554 (451 aa).

This sequence belongs to the UPF0210 family. In terms of assembly, homodimer.

This chain is UPF0210 protein NMCC_1554, found in Neisseria meningitidis serogroup C (strain 053442).